The following is a 284-amino-acid chain: Pantothenate synthetase (284 aa).

Residue 30–37 coordinates ATP; that stretch reads MGNLHDGH. H37 (proton donor) is an active-site residue. Q61 contacts (R)-pantoate. A beta-alanine-binding site is contributed by Q61. ATP is bound at residue 149-152; the sequence is GEKD. Q155 lines the (R)-pantoate pocket. Residues V178 and 186–189 contribute to the ATP site; that span reads LSSR.

It belongs to the pantothenate synthetase family. As to quaternary structure, homodimer.

It is found in the cytoplasm. It carries out the reaction (R)-pantoate + beta-alanine + ATP = (R)-pantothenate + AMP + diphosphate + H(+). It functions in the pathway cofactor biosynthesis; (R)-pantothenate biosynthesis; (R)-pantothenate from (R)-pantoate and beta-alanine: step 1/1. Functionally, catalyzes the condensation of pantoate with beta-alanine in an ATP-dependent reaction via a pantoyl-adenylate intermediate. In Enterobacter sp. (strain 638), this protein is Pantothenate synthetase.